Consider the following 241-residue polypeptide: Adapter protein MecA (241 aa).

The interval 77–102 (KNTDEDDVADESQGDASVDSEHPDQV) is disordered. The segment covering 80–89 (DEDDVADESQ) has biased composition (acidic residues).

It belongs to the MecA family. Homodimer.

Its function is as follows. Enables the recognition and targeting of unfolded and aggregated proteins to the ClpC protease or to other proteins involved in proteolysis. The polypeptide is Adapter protein MecA (Levilactobacillus brevis (strain ATCC 367 / BCRC 12310 / CIP 105137 / JCM 1170 / LMG 11437 / NCIMB 947 / NCTC 947) (Lactobacillus brevis)).